Here is a 229-residue protein sequence, read N- to C-terminus: Large ribosomal subunit protein uL1 (229 aa).

The protein belongs to the universal ribosomal protein uL1 family. As to quaternary structure, part of the 50S ribosomal subunit.

Its function is as follows. Binds directly to 23S rRNA. The L1 stalk is quite mobile in the ribosome, and is involved in E site tRNA release. Protein L1 is also a translational repressor protein, it controls the translation of the L11 operon by binding to its mRNA. This Chlorobium phaeobacteroides (strain DSM 266 / SMG 266 / 2430) protein is Large ribosomal subunit protein uL1.